The chain runs to 473 residues: tRNA modification GTPase MnmE (473 aa).

(6S)-5-formyl-5,6,7,8-tetrahydrofolate contacts are provided by Arg31, Glu95, and Arg134. In terms of domain architecture, TrmE-type G spans Gly230–Lys394. Residues Asn240–Thr245, Ser259–Thr265, and Asp284–Gly287 each bind GTP. Ser244 and Thr265 together coordinate Mg(2+). A (6S)-5-formyl-5,6,7,8-tetrahydrofolate-binding site is contributed by Lys473.

It belongs to the TRAFAC class TrmE-Era-EngA-EngB-Septin-like GTPase superfamily. TrmE GTPase family. As to quaternary structure, homodimer. Heterotetramer of two MnmE and two MnmG subunits. The cofactor is K(+).

It is found in the cytoplasm. Functionally, exhibits a very high intrinsic GTPase hydrolysis rate. Involved in the addition of a carboxymethylaminomethyl (cmnm) group at the wobble position (U34) of certain tRNAs, forming tRNA-cmnm(5)s(2)U34. This is tRNA modification GTPase MnmE from Chlorobaculum tepidum (strain ATCC 49652 / DSM 12025 / NBRC 103806 / TLS) (Chlorobium tepidum).